Here is a 395-residue protein sequence, read N- to C-terminus: MTLQPTPADRFTFGLWTVGWTGADPFGVATRPALDPVEAVHKLSELGAYGITFHDNDLVPFDATASERELILKNFKAALAETGLKTPMVTTNLFSHPVFKDGGFTSNDRSVRRFALSKVLQNIDLAAELGAETFVMWGGREGSEYDGSKDLSAALDRMKEGVDTAAAYIKDKGYGLRIALEPKPNEPRGDIFLPTVGHGLAFIAQLEHGDIVGLNPETGHEQMAGLNFTHGIAQALWAGKLFHIDLNGQRGIKYDQDLVFGHGDLTSAFFTVDLLENGFPNGGPKYDGPRHFDYKPSRTDGYDGVWESAKSNMSMYLLLKERALAFRADPDVQEALKTSGVFELGEPTLAAGETTADLLADASAFAEFDADAAAQRSFAFVRLNQLAIEHLLGAR.

Catalysis depends on residues histidine 54 and aspartate 57. Mg(2+) contacts are provided by glutamate 181, glutamate 217, histidine 220, aspartate 245, aspartate 255, aspartate 257, and aspartate 293.

It belongs to the xylose isomerase family. In terms of assembly, homotetramer. Mg(2+) serves as cofactor.

It localises to the cytoplasm. It carries out the reaction alpha-D-xylose = alpha-D-xylulofuranose. This is Xylose isomerase from Arthrobacter sp. (strain FB24).